The primary structure comprises 314 residues: Probable manganese-dependent inorganic pyrophosphatase (314 aa).

His-10, Asp-14, Asp-16, Asp-80, His-102, and Asp-154 together coordinate Mn(2+).

This sequence belongs to the PPase class C family. Requires Mn(2+) as cofactor.

The protein localises to the cytoplasm. It carries out the reaction diphosphate + H2O = 2 phosphate + H(+). The protein is Probable manganese-dependent inorganic pyrophosphatase (ppaC) of Lactococcus lactis subsp. lactis (strain IL1403) (Streptococcus lactis).